Here is a 449-residue protein sequence, read N- to C-terminus: Protein phosphatase fem-2 (449 aa).

Positions 28–34 (EEAFADE) are interaction with fem-1 and fem-3. The segment at 54–56 (IRF) is interaction with fem-3. One can recognise a PPM-type phosphatase domain in the interval 160–424 (GIHVSGDQLK…DNVSVVIGFL (265 aa)). Mg(2+) contacts are provided by Asp-202, Gly-203, Asp-370, and Asp-415.

Belongs to the PP2C family. In terms of assembly, component of a complex containing fem-1, fem-2 and fem-3. Interacts (via N-terminus) with fem-1 and fem-3. Component of the CBC(fem-1) E3 ubiquitin-protein ligase complex, at least composed of cul-2, elc-1, tra-1, fem-1, fem-2 and fem-3; mediates the ubiquitination and subsequent proteasomal degradation of tra-1. Interacts with tra-1. Interacts with sel-10. Mg(2+) is required as a cofactor. It depends on Mn(2+) as a cofactor.

It carries out the reaction O-phospho-L-seryl-[protein] + H2O = L-seryl-[protein] + phosphate. The enzyme catalyses O-phospho-L-threonyl-[protein] + H2O = L-threonyl-[protein] + phosphate. Dephosphorylates auto-phosphorylated Ca(2+)/calmodulin-dependent protein kinase unc-43/CAMKII in vitro. Involved in the regulation of sex determination. Together with fem-3, required for male sexual development by promoting the proteasomal-mediated degradation of tra-1, a transcription repressor of male-specific genes. Promotes apoptosis. The protein is Protein phosphatase fem-2 of Caenorhabditis elegans.